The primary structure comprises 495 residues: Protein adenylyltransferase Fic (495 aa).

The disordered stretch occupies residues 1–23 (MGTEAEPPSPPSPPAQQQEQANP). The helical transmembrane segment at 36–58 (LYRLVLFFIAGSLTAWMFHAFSS) threads the bilayer. 2 TPR repeats span residues 121 to 154 (ALVSLRMAQDMYLTGKDDKAARLFEHALALAPRH) and 155 to 189 (PEVLLRYGEFLEHNQRNIVLADQYYFQALTISPSN). An Inhibitory (S/T)XXXE(G/N) motif motif is present at residues 246–251 (SVGIEG). Residues Glu-250 and 331-334 (VGGH) each bind ATP. One can recognise a Fido domain in the interval 300 to 435 (ITIKDILELH…IRPFVRFIAD (136 aa)). The active site involves His-378. Residues 382 to 389 (DGNGRTSR), 414 to 415 (YY), and Asn-422 each bind ATP.

It belongs to the fic family. Homodimer.

It is found in the membrane. It catalyses the reaction L-tyrosyl-[protein] + ATP = O-(5'-adenylyl)-L-tyrosyl-[protein] + diphosphate. The catalysed reaction is L-threonyl-[protein] + ATP = 3-O-(5'-adenylyl)-L-threonyl-[protein] + diphosphate. The enzyme catalyses 3-O-(5'-adenylyl)-L-threonyl-[protein] + H2O = L-threonyl-[protein] + AMP + H(+). Its activity is regulated as follows. The side chain of Glu-250 determines which of the two opposing activities (AMPylase or de-AMPylase) will take place. In response to endoplasmic reticulum stress, mediates de-AMPylase activity. Adenylyltransferase activity is inhibited by the inhibitory helix present at the N-terminus: Glu-250 binds ATP and competes with ATP-binding at Arg-389, thereby preventing adenylyltransferase activity. In unstressed cells, disengagement of Glu-250 promotes adenylyltransferase activity. Activation dissociates ATP-binding from Glu-250, allowing ordered binding of the entire ATP moiety with the alpha-phosphate in an orientation that is productive for accepting an incoming target hydroxyl side chain. Its function is as follows. Protein that can both mediate the addition of adenosine 5'-monophosphate (AMP) to specific residues of target proteins (AMPylation), and the removal of the same modification from target proteins (de-AMPylation), depending on the context. The side chain of Glu-250 determines which of the two opposing activities (AMPylase or de-AMPylase) will take place. Acts as a key regulator of the unfolded protein response (UPR) by mediating AMPylation or de-AMPylation of Hsc70-3/BiP. In unstressed cells, acts as an adenylyltransferase by mediating AMPylation of Hsc70-3/BiP at 'Thr-518', thereby inactivating it. In response to endoplasmic reticulum stress, acts as a phosphodiesterase by mediating removal of ATP (de-AMPylation) from Hsc70-3/BiP at 'Thr-518', leading to restore HSPA5/BiP activity. The sequence is that of Protein adenylyltransferase Fic from Drosophila erecta (Fruit fly).